Reading from the N-terminus, the 344-residue chain is Probable dual-specificity RNA methyltransferase RlmN (344 aa).

The active-site Proton acceptor is glutamate 90. In terms of domain architecture, Radical SAM core spans 96-326; it reads YKYGNAICIS…VTIRRELGSS (231 aa). Cysteine 103 and cysteine 331 are disulfide-bonded. The [4Fe-4S] cluster site is built by cysteine 110, cysteine 114, and cysteine 117. S-adenosyl-L-methionine contacts are provided by residues 157 to 158, serine 189, 212 to 214, and asparagine 288; these read GE and SLH. Residue cysteine 331 is the S-methylcysteine intermediate of the active site.

The protein belongs to the radical SAM superfamily. RlmN family. It depends on [4Fe-4S] cluster as a cofactor.

The protein resides in the cytoplasm. It carries out the reaction adenosine(2503) in 23S rRNA + 2 reduced [2Fe-2S]-[ferredoxin] + 2 S-adenosyl-L-methionine = 2-methyladenosine(2503) in 23S rRNA + 5'-deoxyadenosine + L-methionine + 2 oxidized [2Fe-2S]-[ferredoxin] + S-adenosyl-L-homocysteine. The enzyme catalyses adenosine(37) in tRNA + 2 reduced [2Fe-2S]-[ferredoxin] + 2 S-adenosyl-L-methionine = 2-methyladenosine(37) in tRNA + 5'-deoxyadenosine + L-methionine + 2 oxidized [2Fe-2S]-[ferredoxin] + S-adenosyl-L-homocysteine. Functionally, specifically methylates position 2 of adenine 2503 in 23S rRNA and position 2 of adenine 37 in tRNAs. This chain is Probable dual-specificity RNA methyltransferase RlmN, found in Caldicellulosiruptor saccharolyticus (strain ATCC 43494 / DSM 8903 / Tp8T 6331).